The sequence spans 248 residues: DNA/RNA-binding protein ALBA1 (248 aa).

The disordered stretch occupies residues 217-248; sequence GRDGGYRGGNRGGSRSGFRGGRGGFRGGRALS. Positions 222-248 are enriched in gly residues; the sequence is YRGGNRGGSRSGFRGGRGGFRGGRALS.

It belongs to the histone-like Alba family. As to quaternary structure, may form homodimers. Identified in a TARE6-associated complex consisting of over 30 proteins and including ALBA1, ALBA2 and ALBA4; the complex binds to the non-coding subtelomeric repeat region TARE6.

Its subcellular location is the nucleus. The protein localises to the chromosome. It localises to the telomere. It is found in the cytoplasm. Possesses DNA- and RNA-binding activities. During the asexual blood stages binds to a sub-population of mature mRNAs and regulates the timing of their translation. Binds to DNA with relaxed sequence specificity. Associates with the subtelomeric TARE6 repeats. The polypeptide is DNA/RNA-binding protein ALBA1 (Plasmodium falciparum (isolate 3D7)).